Here is a 150-residue protein sequence, read N- to C-terminus: Arginine repressor (150 aa).

This sequence belongs to the ArgR family.

Its subcellular location is the cytoplasm. Its pathway is amino-acid biosynthesis; L-arginine biosynthesis [regulation]. In terms of biological role, regulates arginine biosynthesis genes. The sequence is that of Arginine repressor from Psychromonas ingrahamii (strain DSM 17664 / CCUG 51855 / 37).